Here is a 337-residue protein sequence, read N- to C-terminus: Autophagy protein 5 (337 aa).

Residue lysine 128 forms a Glycyl lysine isopeptide (Lys-Gly) (interchain with G-Cter in ATG12) linkage. Residues 271-290 (RAQTSGEERSIDDTEEADGS) are disordered. Residues 276–290 (GEERSIDDTEEADGS) show a composition bias toward basic and acidic residues.

Belongs to the ATG5 family. As to quaternary structure, conjugated to ATG12. Conjugated to ATG12; which is essential for autophagy. Conjugation with ATG12 involves ATG7 as an E1-like activating enzyme and ATG10 as an E2-like conjugating enzyme. Ubiquitous.

The protein localises to the cytoplasm. Required for autophagy. Conjugation to ATG12 is essential for plant nutrient recycling. Involved in a negative feedback loop that modulates NPR1-dependent salicylic acid (SA) signaling and limits senescence and immunity-related programmed cell death (PCD) in plants. Involved in complete proteolysis of chloroplast stroma proteins in senescent leaves. Involved in the degradation of damaged peroxisomes. The protein is Autophagy protein 5 of Arabidopsis thaliana (Mouse-ear cress).